Here is a 645-residue protein sequence, read N- to C-terminus: MSNIDFLPISKEDLKKRNIDVLDFIIVTGDAYVDHPSFGTAIIGRVLEREGFTVGIIAQPNWNNIEDFKKLGKPKYGFLVNSGNIDSMVNHYTASKKKRHDDFYSPGGKSGYRPDRAVIVYCNKIKEAFKDSPIIIGGIEASLRRFAHYDYWDNSVRRSILEDSSADLLIYGMGEKPIVQVSNLLRYGMKIDSIKNVRGTTYIEKDISSLKDYIEIPSFEEVSTNKKSYAEAYKIQYYEQDSIRGKTLVQKHKERYVVQNPPQPPLSQEEMDEVYALPYARTYHPMYEAEGGIPAIKEVKFSITSHRGCYGSCSFCALTFHQGRVIQNRSQDSILKEANMMTNMKDFKGYIHDVGGPTANFRHRACKVQEKHGTCKNKQCVFPKACKNLIVDHKEYLSLLRKIRKIPNVKKVFIRSGIRFDYLMYDKNDEFFKELCEHHISGQLKVAPEHISDKVLNLMGKPTRNVYDSFVKKYYDINKKIHKNQFLVPYLMSSHPGSDLKAAIELAQYIKKMGYTPEQVQDFYPTPGSLSTTMYYTGINPLTEEKVYIPKDQKEKRMQRALLQFSIHDNYDLVKEALIKAHREDLIGNGPDCLIPYNKPYKKSHKKNNAKNNNNHYNKNNNYNKNKDISKKNKKNSLSKHKKRK.

Residues 295 to 566 (AIKEVKFSIT…RMQRALLQFS (272 aa)) form the Radical SAM core domain. C309, C313, and C316 together coordinate [4Fe-4S] cluster. The tract at residues 598–645 (NKPYKKSHKKNNAKNNNNHYNKNNNYNKNKDISKKNKKNSLSKHKKRK) is disordered. A compositionally biased stretch (basic residues) spans 600 to 609 (PYKKSHKKNN). Residues 610 to 624 (AKNNNNHYNKNNNYN) are compositionally biased toward low complexity. Residues 632-645 (KNKKNSLSKHKKRK) show a composition bias toward basic residues.

Belongs to the UPF0313 family. The cofactor is [4Fe-4S] cluster.

The sequence is that of UPF0313 protein CLB_0243 from Clostridium botulinum (strain ATCC 19397 / Type A).